The following is a 338-amino-acid chain: MDSFPAIEIDKVKAWDFRLANINTSECLNVAYGVDANYLDGVGVSITSIVLNNRHINLDFYIIADVYNDGFFQKIAKLAEQNQLRITLYRINTDKLQCLPCTQVWSRAMYFRLFAFQLLGLTLDRLLYLDADVVCKGDISQLLHLGLNGAVAAVVKDVEPMQEKAVSRLSDPELLGQYFNSGVVYLDLKKWADAKLTEKALSILMSKDNVYKYPDQDVMNVLLKGMTLFLPREYNTIYTIKSELKDKTHQNYKKLITESTLLIHYTGATKPWHKWAIYPSVKYYKIALENSPWKDDSPRDAKSIIEFKKRYKHLLVQHHYISGIIAGVCYLCRKYYRK.

UDP contacts are provided by residues 33 to 38 (GVDANY) and 130 to 131 (DA). Positions 130 and 132 each coordinate Mg(2+). Short sequence motifs (DXD) lie at residues 130–132 (DAD) and 215–217 (DQD). Mg(2+) is bound at residue H264. A UDP-binding site is contributed by 264 to 270 (HYTGATK).

The protein belongs to the glycosyltransferase 8 family. The cofactor is Mg(2+).

The protein localises to the cell inner membrane. It catalyses the reaction UDP-glucose + [lipopolysaccharide] = UDP + D-glucosyl-[lipopolysaccharide].. The catalysed reaction is alpha-D-Glc-(1-&gt;3)-[alpha-D-Gal-(1-&gt;6)]-alpha-D-Glc-(1-&gt;3)-[L-alpha-D-Hep-(1-&gt;7)]-4-O-PO3(2-)-L-alpha-D-Hep-(1-&gt;3)-4-O-PO3(2-)-L-alpha-D-Hep-(1-&gt;5)-[alpha-Kdo-(2-&gt;4)]-alpha-Kdo-(2-&gt;6)-lipid A + UDP-alpha-D-glucose = alpha-D-Glc-(1-&gt;2)-alpha-D-Glc-(1-&gt;3)-[alpha-D-Gal-(1-&gt;6)]-alpha-D-Glc-(1-&gt;3)-[L-alpha-D-Hep-(1-&gt;7)]-4-O-PO3(2-)-L-alpha-D-Hep-(1-&gt;3)-4-O-PO3(2-)-L-alpha-D-Hep-(1-&gt;5)-[alpha-Kdo-(2-&gt;4)]-alpha-Kdo-(2-&gt;6)-lipid A + UDP + H(+). Its pathway is bacterial outer membrane biogenesis; LPS core biosynthesis. Functionally, glucosyltransferase involved in the biosynthesis of the core oligosaccharide region of lipopolysaccharide (LPS). Catalyzes the addition of a glucose (glucose III) to the outer-core glucose II. This chain is Lipopolysaccharide 1,2-glucosyltransferase, found in Escherichia coli (strain K12).